The following is a 777-amino-acid chain: DnaJ homolog subfamily C member 16 (777 aa).

Positions 1 to 23 (MELGRAGPAGLLLLLLLLLAAQA) are cleaved as a signal peptide. Topologically, residues 24–531 (APERDPYRVL…DSLFHSNWRE (508 aa)) are cytoplasmic. The J domain maps to 28–92 (DPYRVLGVGR…EKRANFDRYG (65 aa)). A Thioredoxin domain is found at 117–243 (FDESFFHFPF…LRQFVENLLP (127 aa)). The helical; Anchor for type IV membrane protein transmembrane segment at 532 to 552 (MMPLLSLLFSALFILFGTVIV) threads the bilayer. Over 553 to 777 (QAFSDSSDTR…FYIPSWPALD (225 aa)) the chain is Extracellular. The disordered stretch occupies residues 558–589 (SSDTRDSPASEKKDTTAKTEKNDTSFNKESNS). Over residues 559–580 (SDTRDSPASEKKDTTAKTEKND) the composition is skewed to basic and acidic residues. Residue Asn627 is glycosylated (N-linked (GlcNAc...) asparagine).

Its subcellular location is the endoplasmic reticulum membrane. Its function is as follows. Plays an important role in regulating the size of autophagosomes during the formation process. In Gallus gallus (Chicken), this protein is DnaJ homolog subfamily C member 16 (DNAJC16).